The chain runs to 216 residues: Ribosomal RNA small subunit methyltransferase G (216 aa).

Residues Gly73, Leu78, 124–125, and Arg139 each bind S-adenosyl-L-methionine; that span reads AE.

The protein belongs to the methyltransferase superfamily. RNA methyltransferase RsmG family.

The protein resides in the cytoplasm. Its function is as follows. Specifically methylates the N7 position of guanine in position 518 of 16S rRNA. The sequence is that of Ribosomal RNA small subunit methyltransferase G from Arthrobacter sp. (strain FB24).